Here is a 653-residue protein sequence, read N- to C-terminus: Pentatricopeptide repeat-containing protein At3g14730 (653 aa).

PPR repeat units lie at residues 59 to 93, 95 to 119, 125 to 159, 160 to 193, 194 to 224, 226 to 260, 261 to 295, 296 to 326, 327 to 361, 362 to 396, 401 to 431, 432 to 466, 467 to 497, and 503 to 537; these read NVAT…GFLD, SPRA…VLVF, DVFG…GILP, DKYT…GFDS, DCYV…LPDR, DSVL…GVGV, SRHT…GSGS, DIVV…MDER, DLFT…GIRP, DIVT…GLLN, NEFI…MRVK, DSAS…GVKP, DEIT…METV, and TSDH…DNPV. Residues 538–613 form a type E motif region; it reads VWRSILSSCR…TPGCSWIVLK (76 aa). The tract at residues 614–644 is type E(+) motif; that stretch reads NGVHTFFTGNQTHPEFKSIHDWLSLVISHMH.

The protein belongs to the PPR family. PCMP-E subfamily.

In Arabidopsis thaliana (Mouse-ear cress), this protein is Pentatricopeptide repeat-containing protein At3g14730 (PCMP-E31).